The following is a 370-amino-acid chain: Probable trehalose-phosphate phosphatase 6 (370 aa).

The protein belongs to the trehalose phosphatase family. It depends on a divalent metal cation as a cofactor.

It catalyses the reaction alpha,alpha-trehalose 6-phosphate + H2O = alpha,alpha-trehalose + phosphate. Its pathway is glycan biosynthesis; trehalose biosynthesis. In terms of biological role, removes the phosphate from trehalose 6-phosphate to produce free trehalose. Trehalose accumulation in plant may improve abiotic stress tolerance. The chain is Probable trehalose-phosphate phosphatase 6 (TPP6) from Oryza sativa subsp. japonica (Rice).